The primary structure comprises 163 residues: Nucleotide-binding protein RER_17110 (163 aa).

Belongs to the YajQ family.

Nucleotide-binding protein. This is Nucleotide-binding protein RER_17110 from Rhodococcus erythropolis (strain PR4 / NBRC 100887).